The primary structure comprises 20 residues: Tetracycline resistance leader peptide (20 aa).

A disordered region spans residues 1-20 (MKCNKMNRVQLKEGSVSMTL).

The protein is Tetracycline resistance leader peptide (tetL) of Bacillus subtilis (strain 168).